Reading from the N-terminus, the 318-residue chain is Methionyl-tRNA formyltransferase (318 aa).

(6S)-5,6,7,8-tetrahydrofolate is bound at residue 115–118; sequence SLLP.

Belongs to the Fmt family.

It carries out the reaction L-methionyl-tRNA(fMet) + (6R)-10-formyltetrahydrofolate = N-formyl-L-methionyl-tRNA(fMet) + (6S)-5,6,7,8-tetrahydrofolate + H(+). Its function is as follows. Attaches a formyl group to the free amino group of methionyl-tRNA(fMet). The formyl group appears to play a dual role in the initiator identity of N-formylmethionyl-tRNA by promoting its recognition by IF2 and preventing the misappropriation of this tRNA by the elongation apparatus. The chain is Methionyl-tRNA formyltransferase from Deinococcus radiodurans (strain ATCC 13939 / DSM 20539 / JCM 16871 / CCUG 27074 / LMG 4051 / NBRC 15346 / NCIMB 9279 / VKM B-1422 / R1).